We begin with the raw amino-acid sequence, 275 residues long: 3-methyl-2-oxobutanoate hydroxymethyltransferase (275 aa).

Mg(2+) contacts are provided by Asp49 and Asp88. Residues 49 to 50, Asp88, and Lys118 contribute to the 3-methyl-2-oxobutanoate site; that span reads DS. Residue Glu120 coordinates Mg(2+). Glu187 serves as the catalytic Proton acceptor.

It belongs to the PanB family. In terms of assembly, homodecamer; pentamer of dimers. Mg(2+) serves as cofactor.

Its subcellular location is the cytoplasm. The catalysed reaction is 3-methyl-2-oxobutanoate + (6R)-5,10-methylene-5,6,7,8-tetrahydrofolate + H2O = 2-dehydropantoate + (6S)-5,6,7,8-tetrahydrofolate. It functions in the pathway cofactor biosynthesis; (R)-pantothenate biosynthesis; (R)-pantoate from 3-methyl-2-oxobutanoate: step 1/2. In terms of biological role, catalyzes the reversible reaction in which hydroxymethyl group from 5,10-methylenetetrahydrofolate is transferred onto alpha-ketoisovalerate to form ketopantoate. This Brucella melitensis biotype 1 (strain ATCC 23456 / CCUG 17765 / NCTC 10094 / 16M) protein is 3-methyl-2-oxobutanoate hydroxymethyltransferase.